The following is a 350-amino-acid chain: Pro-cathepsin H (350 aa).

The signal sequence occupies residues 1–19; it reads MAQWTLLIVFFCVATAAAG. A propeptide spans 20 to 113 (activation peptide); sequence LSFHDSNPIR…WEEFRSHRLG (94 aa). A glycan (N-linked (GlcNAc...) asparagine) is linked at asparagine 117. Positions 122–132 are cleaved as a propeptide — removed in mature form; it reads LKGNHRITDVV. 2 disulfides stabilise this stretch: cysteine 154-cysteine 197 and cysteine 188-cysteine 230. The active site involves cysteine 157. A glycan (N-linked (GlcNAc...) asparagine) is linked at asparagine 177. Residue asparagine 246 is glycosylated (N-linked (GlcNAc...) asparagine). Cysteine 288 and cysteine 338 are oxidised to a cystine. Residues histidine 297 and asparagine 317 contribute to the active site.

This sequence belongs to the peptidase C1 family. In terms of assembly, interacts with KPI104 and KPI106. Composed of a mini chain and a large chain. The large chain may be split into heavy and light chain. All chains are held together by disulfide bonds.

The protein localises to the vacuole. Its subcellular location is the lysosome. It catalyses the reaction Hydrolysis of proteins, acting as an aminopeptidase (notably, cleaving Arg-|-Xaa bonds) as well as an endopeptidase.. In terms of biological role, may play a role in proteolysis leading to mobilization of nitrogen during senescence and starvation. This is Pro-cathepsin H from Medicago truncatula (Barrel medic).